A 528-amino-acid chain; its full sequence is Tyrosine--tRNA ligase, cytoplasmic (528 aa).

Met1 carries the post-translational modification N-acetylmethionine. Gly2 is subject to N-acetylglycine; in Tyrosine--tRNA ligase, cytoplasmic, N-terminally processed. Tyr39 lines the L-tyrosine pocket. Tyr39 contacts trans-resveratrol. A 'HIGH' region motif is present at residues 44-52 (TTGKPHVAY). L-tyrosine-binding residues include Tyr166, Gln170, Asp173, and Gln188. Gln170 and Asp173 together coordinate trans-resveratrol. At Lys197 the chain carries N6-acetyllysine. Ser205 carries the phosphoserine modification. The residue at position 206 (Lys206) is an N6-acetyllysine. The 'KMSKS' region motif lies at 222–226 (KMSSS). The Nuclear localization signal motif lies at 242 to 247 (KKKLKK). The tract at residues 339-363 (AAYPDPSKQKPMAKGPAKNSEPEEV) is disordered. Residues 364-468 (IPSRLDIRVG…AGSAPGERVF (105 aa)) enclose the tRNA-binding domain. Ser386 is subject to Phosphoserine. Residues Lys474, Lys482, and Lys490 each carry the N6-acetyllysine modification.

Belongs to the class-I aminoacyl-tRNA synthetase family. In terms of assembly, homodimer. Interacts (when binding to resveratrol) with PARP1; interaction stimulates the poly-ADP-ribosyltransferase activity of PARP1.

The protein localises to the cytoplasm. It is found in the nucleus. The catalysed reaction is tRNA(Tyr) + L-tyrosine + ATP = L-tyrosyl-tRNA(Tyr) + AMP + diphosphate + H(+). Its activity is regulated as follows. Resveratrol strongly inhibits the tyrosine--tRNA ligase activity. Functionally, tyrosine--tRNA ligase that catalyzes the attachment of tyrosine to tRNA(Tyr) in a two-step reaction: tyrosine is first activated by ATP to form Tyr-AMP and then transferred to the acceptor end of tRNA(Tyr). Also acts as a positive regulator of poly-ADP-ribosylation in the nucleus, independently of its tyrosine--tRNA ligase activity. Activity is switched upon resveratrol-binding: resveratrol strongly inhibits the tyrosine--tRNA ligase activity and promotes relocalization to the nucleus, where YARS1 specifically stimulates the poly-ADP-ribosyltransferase activity of PARP1. This Pongo abelii (Sumatran orangutan) protein is Tyrosine--tRNA ligase, cytoplasmic (YARS1).